A 250-amino-acid polypeptide reads, in one-letter code: Flavin-dependent thymidylate synthase (250 aa).

The ThyX domain maps to 7–233 (LRVQLIAKTD…PAVFADFEVT (227 aa)). FAD contacts are provided by residues Ser-71, 95–97 (RHR), and Gln-103. DUMP is bound by residues 92–95 (ELIR), 103–107 (QLSQR), and Arg-172. Residues 95–105 (RHRHFSYSQLS) carry the ThyX motif motif. FAD-binding positions include 188–190 (NYR) and His-194. Residue Arg-199 participates in dUMP binding. Arg-199 (involved in ionization of N3 of dUMP, leading to its activation) is an active-site residue.

It belongs to the thymidylate synthase ThyX family. In terms of assembly, homotetramer. Requires FAD as cofactor.

It catalyses the reaction dUMP + (6R)-5,10-methylene-5,6,7,8-tetrahydrofolate + NADPH + H(+) = dTMP + (6S)-5,6,7,8-tetrahydrofolate + NADP(+). The protein operates within pyrimidine metabolism; dTTP biosynthesis. Its function is as follows. Catalyzes the reductive methylation of 2'-deoxyuridine-5'-monophosphate (dUMP) to 2'-deoxythymidine-5'-monophosphate (dTMP) while utilizing 5,10-methylenetetrahydrofolate (mTHF) as the methyl donor, and NADPH and FADH(2) as the reductant. The polypeptide is Flavin-dependent thymidylate synthase (Mycobacterium bovis (strain ATCC BAA-935 / AF2122/97)).